A 365-amino-acid polypeptide reads, in one-letter code: UDP-N-acetylglucosamine--N-acetylmuramyl-(pentapeptide) pyrophosphoryl-undecaprenol N-acetylglucosamine transferase (365 aa).

Residues 17-19, N129, R167, S194, I250, 269-274, and Q295 contribute to the UDP-N-acetyl-alpha-D-glucosamine site; these read TGG and ALTVSE.

Belongs to the glycosyltransferase 28 family. MurG subfamily.

The protein resides in the cell inner membrane. It catalyses the reaction di-trans,octa-cis-undecaprenyl diphospho-N-acetyl-alpha-D-muramoyl-L-alanyl-D-glutamyl-meso-2,6-diaminopimeloyl-D-alanyl-D-alanine + UDP-N-acetyl-alpha-D-glucosamine = di-trans,octa-cis-undecaprenyl diphospho-[N-acetyl-alpha-D-glucosaminyl-(1-&gt;4)]-N-acetyl-alpha-D-muramoyl-L-alanyl-D-glutamyl-meso-2,6-diaminopimeloyl-D-alanyl-D-alanine + UDP + H(+). It participates in cell wall biogenesis; peptidoglycan biosynthesis. Cell wall formation. Catalyzes the transfer of a GlcNAc subunit on undecaprenyl-pyrophosphoryl-MurNAc-pentapeptide (lipid intermediate I) to form undecaprenyl-pyrophosphoryl-MurNAc-(pentapeptide)GlcNAc (lipid intermediate II). The sequence is that of UDP-N-acetylglucosamine--N-acetylmuramyl-(pentapeptide) pyrophosphoryl-undecaprenol N-acetylglucosamine transferase from Shewanella sediminis (strain HAW-EB3).